The primary structure comprises 149 residues: Transcriptional repressor NrdR (149 aa).

A zinc finger spans residues 3–34 (CPFCSAVDTKVIDSRLVAEGHQVRRRRECLLC). The ATP-cone domain occupies 49-139 (PRVIKSNGSR…VYRSFEDIRE (91 aa)).

It belongs to the NrdR family. Requires Zn(2+) as cofactor.

Its function is as follows. Negatively regulates transcription of bacterial ribonucleotide reductase nrd genes and operons by binding to NrdR-boxes. This Aeromonas salmonicida (strain A449) protein is Transcriptional repressor NrdR.